Reading from the N-terminus, the 185-residue chain is Elongation factor P (185 aa).

This sequence belongs to the elongation factor P family.

Its subcellular location is the cytoplasm. The protein operates within protein biosynthesis; polypeptide chain elongation. Involved in peptide bond synthesis. Stimulates efficient translation and peptide-bond synthesis on native or reconstituted 70S ribosomes in vitro. Probably functions indirectly by altering the affinity of the ribosome for aminoacyl-tRNA, thus increasing their reactivity as acceptors for peptidyl transferase. The chain is Elongation factor P from Clostridium kluyveri (strain ATCC 8527 / DSM 555 / NBRC 12016 / NCIMB 10680 / K1).